The sequence spans 379 residues: L-lactate dehydrogenase (379 aa).

Positions 1–379 (MIISASTDYR…IGRDSLVSLP (379 aa)) constitute an FMN hydroxy acid dehydrogenase domain. Y24 contacts substrate. Positions 106 and 127 each coordinate FMN. Substrate is bound at residue Y129. T155 is a binding site for FMN. R164 contacts substrate. K251 contributes to the FMN binding site. The active-site Proton acceptor is H275. Substrate is bound at residue R278. 306 to 330 (DSGIRTGLDVVRMLALGADTVLLGR) serves as a coordination point for FMN.

Belongs to the FMN-dependent alpha-hydroxy acid dehydrogenase family. FMN serves as cofactor.

It localises to the cell inner membrane. It carries out the reaction (S)-lactate + A = pyruvate + AH2. Its function is as follows. Catalyzes the conversion of L-lactate to pyruvate. Is coupled to the respiratory chain. This Stenotrophomonas maltophilia (strain K279a) protein is L-lactate dehydrogenase.